The following is a 93-amino-acid chain: Small ribosomal subunit protein uS19 (93 aa).

The protein belongs to the universal ribosomal protein uS19 family.

Functionally, protein S19 forms a complex with S13 that binds strongly to the 16S ribosomal RNA. This Rubrobacter xylanophilus (strain DSM 9941 / JCM 11954 / NBRC 16129 / PRD-1) protein is Small ribosomal subunit protein uS19.